The primary structure comprises 741 residues: Penicillin-binding protein 1B (741 aa).

The Cytoplasmic segment spans residues 1–12 (MYPVNLKLSIKF). A helical; Signal-anchor for type II membrane protein transmembrane segment spans residues 13-33 (LFYFFLYFLLIIIIYGVYLYF). Topologically, residues 34–741 (KINQVIHGKI…WIRNHNIFCT (708 aa)) are extracellular. A transglycosylase region spans residues 139 to 311 (LRLDPQLIAM…SLYNPWNNPV (173 aa)). E177 serves as the catalytic Proton donor; for transglycosylase activity. The transpeptidase stretch occupies residues 395 to 687 (ENAIRHGIQQ…STGAMKIYHN (293 aa)). The Acyl-ester intermediate; for transpeptidase activity role is filled by S454.

This sequence in the N-terminal section; belongs to the glycosyltransferase 51 family. The protein in the C-terminal section; belongs to the transpeptidase family.

Its subcellular location is the cell membrane. It catalyses the reaction [GlcNAc-(1-&gt;4)-Mur2Ac(oyl-L-Ala-gamma-D-Glu-L-Lys-D-Ala-D-Ala)](n)-di-trans,octa-cis-undecaprenyl diphosphate + beta-D-GlcNAc-(1-&gt;4)-Mur2Ac(oyl-L-Ala-gamma-D-Glu-L-Lys-D-Ala-D-Ala)-di-trans,octa-cis-undecaprenyl diphosphate = [GlcNAc-(1-&gt;4)-Mur2Ac(oyl-L-Ala-gamma-D-Glu-L-Lys-D-Ala-D-Ala)](n+1)-di-trans,octa-cis-undecaprenyl diphosphate + di-trans,octa-cis-undecaprenyl diphosphate + H(+). The enzyme catalyses Preferential cleavage: (Ac)2-L-Lys-D-Ala-|-D-Ala. Also transpeptidation of peptidyl-alanyl moieties that are N-acyl substituents of D-alanine.. It functions in the pathway cell wall biogenesis; peptidoglycan biosynthesis. Cell wall formation. Synthesis of cross-linked peptidoglycan from the lipid intermediates. The enzyme has a penicillin-insensitive transglycosylase N-terminal domain (formation of linear glycan strands) and a penicillin-sensitive transpeptidase C-terminal domain (cross-linking of the peptide subunits). The sequence is that of Penicillin-binding protein 1B (mrcB) from Buchnera aphidicola subsp. Baizongia pistaciae (strain Bp).